A 292-amino-acid polypeptide reads, in one-letter code: Protease HtpX (292 aa).

The next 2 helical transmembrane spans lie at 5-25 and 34-54; these read IFLFLLTNLAVLMLAGIVMSL and SGLLVMAAIFGFGGSFISLLL. H140 provides a ligand contact to Zn(2+). The active site involves E141. H144 is a Zn(2+) binding site. The next 2 membrane-spanning stretches (helical) occupy residues 155-175 and 193-213; these read LLQGVLNTFVIVLARVVGGII and IIVFALEMVFGLFATMIAMWF. E218 provides a ligand contact to Zn(2+).

It belongs to the peptidase M48B family. The cofactor is Zn(2+).

It is found in the cell inner membrane. This Xanthomonas euvesicatoria pv. vesicatoria (strain 85-10) (Xanthomonas campestris pv. vesicatoria) protein is Protease HtpX.